Consider the following 713-residue polypeptide: Leucine-rich repeat-containing protein 4B (713 aa).

A signal peptide spans 1–35; the sequence is MARARGSPCPPLPPGRMSWPHGALLFLWLFSPPLG. Topologically, residues 36–576 are extracellular; sequence AGGGGVAVTS…DLDDVMKTTK (541 aa). Residues 48–86 enclose the LRRNT domain; sequence GGGSPPATSCPVACSCSNQASRVICTRRDLAEVPASIPV. LRR repeat units follow at residues 87–108, 111–132, 135–156, 159–180, 183–205, 208–229, 230–251, 254–275, and 278–299; these read NTRYLNLQENGIQVIRTDTFKH, HLEILQLSKNLVRKIEVGAFNG, SLNTLELFDNRLTTVPTQAFEY, KLRELWLRNNPIESIPSYAFNR, SLRRLDLGELKRLEYISEAAFEG, NLRYLNLGMCNLKDIPNLTALV, RLEELELSGNRLDLIRPGSFQG, SLRKLWLMHAQVATIERNAFDD, and SLEELNLSHNNLMSLPHDLFTP. The N-linked (GlcNAc...) asparagine glycan is linked to asparagine 224. 8 N-linked (GlcNAc...) asparagine glycosylation sites follow: asparagine 283, asparagine 333, asparagine 374, asparagine 400, asparagine 422, asparagine 425, asparagine 444, and asparagine 452. The LRRCT domain occupies 311-363; sequence NPWHCNCDVLWLSWWLKETVPSNTTCCARCHAPAGLKGRYIGELDQSHFTCYA. The 89-residue stretch at 364-452 folds into the Ig-like C2-type domain; sequence PVIVEPPTDL…GNTTASATLN (89 aa). A disulfide bridge links cysteine 385 with cysteine 436. Residues 497 to 551 form a disordered region; that stretch reads TQPGEEALQPRGTEKEPPGPTTDGVWGGGRPGDAAGPASSSTTAPAPRSSRPTEK. Residues 528 to 546 show a composition bias toward low complexity; sequence GDAAGPASSSTTAPAPRSS. Residues 577–597 traverse the membrane as a helical segment; sequence IIIGCFVAITFMAAVMLVAFY. The Cytoplasmic portion of the chain corresponds to 598–713; that stretch reads KLRKQHQLHK…SKENVQETQI (116 aa). Serine 693 carries the phosphoserine modification. The tract at residues 694 to 713 is disordered; the sequence is IHEPLLFKSGSKENVQETQI. Residues 703 to 713 show a composition bias toward basic and acidic residues; the sequence is GSKENVQETQI.

In terms of assembly, interacts with PTPRF. Interacts with DLG4. N-glycosylated. O-glycosylated; contains sialic acid.

Its subcellular location is the membrane. It localises to the presynaptic cell membrane. Functionally, synaptic adhesion protein. Regulates the formation of excitatory synapses. The trans-synaptic adhesion between LRRC4B and PTPRF regulates the formation of excitatory synapses in a bidirectional manner. The polypeptide is Leucine-rich repeat-containing protein 4B (LRRC4B) (Homo sapiens (Human)).